The sequence spans 374 residues: DNA integrity scanning protein DisA (374 aa).

A DAC domain is found at 20–158 (EALMRASLSA…DGERRVLEES (139 aa)). Residues Gly87, Leu105, and 118 to 122 (TRHRT) each bind ATP.

The protein belongs to the DisA family. Homooctamer. The cofactor is Mg(2+).

It catalyses the reaction 2 ATP = 3',3'-c-di-AMP + 2 diphosphate. In terms of biological role, participates in a DNA-damage check-point that is active prior to asymmetric division when DNA is damaged. DisA forms globular foci that rapidly scan along the chromosomes during sporulation, searching for lesions. When a lesion is present, DisA pauses at the lesion site. This triggers a cellular response that culminates in a temporary block in sporulation initiation. Its function is as follows. Also has diadenylate cyclase activity, catalyzing the condensation of 2 ATP molecules into cyclic di-AMP (c-di-AMP). c-di-AMP acts as a signaling molecule that couples DNA integrity with progression of sporulation. The rise in c-di-AMP level generated by DisA while scanning the chromosome, operates as a positive signal that advances sporulation; upon encountering a lesion, the DisA focus arrests at the damaged site and halts c-di-AMP synthesis. This is DNA integrity scanning protein DisA from Streptomyces griseus subsp. griseus (strain JCM 4626 / CBS 651.72 / NBRC 13350 / KCC S-0626 / ISP 5235).